The chain runs to 243 residues: UPF0758 protein Tery_2667 (243 aa).

The MPN domain occupies V113–L235. H184, H186, and D197 together coordinate Zn(2+). The JAMM motif signature appears at H184–D197.

The protein belongs to the UPF0758 family.

This is UPF0758 protein Tery_2667 from Trichodesmium erythraeum (strain IMS101).